A 113-amino-acid chain; its full sequence is Ribonuclease P protein component (113 aa).

This sequence belongs to the RnpA family. Consists of a catalytic RNA component (M1 or rnpB) and a protein subunit.

It catalyses the reaction Endonucleolytic cleavage of RNA, removing 5'-extranucleotides from tRNA precursor.. Its function is as follows. RNaseP catalyzes the removal of the 5'-leader sequence from pre-tRNA to produce the mature 5'-terminus. It can also cleave other RNA substrates such as 4.5S RNA. The protein component plays an auxiliary but essential role in vivo by binding to the 5'-leader sequence and broadening the substrate specificity of the ribozyme. This chain is Ribonuclease P protein component, found in Vesicomyosocius okutanii subsp. Calyptogena okutanii (strain HA).